We begin with the raw amino-acid sequence, 968 residues long: Breast cancer anti-estrogen resistance protein 1 (968 aa).

An N-acetylmethionine modification is found at methionine 1. Residues 97 to 159 (DKNVLAKALY…PGNRLKILVG (63 aa)) form the SH3 domain. Residues 164-277 (KPAAPGPGPP…GPGSPAQDIY (114 aa)) are disordered. The span at 167 to 182 (APGPGPPATPPQPQPS) shows a compositional bias: pro residues. The interval 213–514 (YLVPTPSKTQ…DGVYAVPPPA (302 aa)) is substrate for kinases. The residue at position 226 (tyrosine 226) is a Phosphotyrosine; by SRC. Polar residues predominate over residues 233–249 (PQFQSPPAKQTSTFSKQ). Serine 237 bears the Phosphoserine mark. Residue tyrosine 332 is modified to Phosphotyrosine. A Phosphotyrosine; by ABL1 modification is found at tyrosine 347. Threonine 367 bears the Phosphothreonine mark. Phosphoserine is present on serine 390. The disordered stretch occupies residues 393-416 (KGLPPSNHHSVYDVPPSVSKDVPD). A phosphotyrosine mark is found at tyrosine 460, tyrosine 470, and tyrosine 508. Disordered stretches follow at residues 503-544 (IDDG…SLEV) and 705-756 (RTKA…NSEG). The segment covering 514-524 (AEREAPTDGKR) has biased composition (basic and acidic residues). The segment covering 525–542 (LSASSTGSTRSSQSASSL) has biased composition (low complexity). Phosphoserine occurs at positions 526, 535, and 737. Positions 715–753 (GSSSLHLNPTDKASSIQSRPLPSPPKFTSQDSPDGQYEN) are enriched in polar residues. Positions 733–741 (RPLPSPPKF) match the SH3-binding motif. The divergent helix-loop-helix motif stretch occupies residues 844-894 (FYLEQCEANLTTLTDAVDAFFTAVATNQPPKIFVAHSKFVILSAHKLVFIG).

It belongs to the CAS family. As to quaternary structure, forms complexes in vivo with PTK2/FAK1, adapter protein CRKL and LYN kinase. Can heterodimerize with NEDD9. Component of a complex comprised of SH2D3C, BCAR1/CAS, and CRK. Within the complex, interacts with SH2D3C (via C-terminus), and CRK. Part of a complex comprised of PTPRA, BCAR1, BCAR3 (via SH2 domain) and SRC; the formation of the complex is dependent on integrin mediated-tyrosine phosphorylation of PTPRA. Interacts with BCAR3 (via Ras-GEF domain); the interaction regulates adhesion-dependent serine phosphorylation. Interacts with SMAD2 and SMAD3. Interacts with NPHP1. Interacts with PTK2B/PYK2. Interacts (via C-terminus) with SH2D3C/CHAT isoform 2 (via C-terminus). Interacts with activated CSPG4. Interacts with BMX, INPPL1/SHIP2 and PEAK1. Part of a collagen stimulated complex involved in cell migration composed of CDC42, CRK, TNK2 and BCAR1/p130cas. Interacts with TNK2 via SH3 domains. Interacts with PTK2B/PYK2. Interacts (when tyrosine-phosphorylated) with tensin TNS1; the interaction is increased by phosphorylation of TNS1. Post-translationally, PTK2/FAK1 activation mediates phosphorylation at the YDYVHL motif; phosphorylation is most likely catalyzed by SRC family members. SRC-family kinases are recruited to the phosphorylated sites and can phosphorylate other tyrosine residues. Tyrosine phosphorylation is triggered by integrin mediated adhesion of cells to the extracellular matrix. Phosphorylated by SRC kinase in a EDN1- and PTK2B-mediated manner; phosphorylation strengthens its interaction with BCAR3 as part of the PTK2B/BCAR1/BCAR3/RAP1 signaling pathway. In terms of processing, dephosphorylated by PTPN14 at Tyr-226. Widely expressed. Higher expression in lung, intestine and testis.

The protein localises to the cell junction. It is found in the focal adhesion. The protein resides in the cytoplasm. It localises to the cell projection. Its subcellular location is the axon. Docking protein which plays a central coordinating role for tyrosine-kinase-based signaling related to cell adhesion. Implicated in induction of cell migration and cell branching. Involved in the BCAR3-mediated inhibition of TGFB signaling. This Rattus norvegicus (Rat) protein is Breast cancer anti-estrogen resistance protein 1 (Bcar1).